The sequence spans 255 residues: NAD kinase (255 aa).

The active-site Proton acceptor is aspartate 44. NAD(+) contacts are provided by residues 44-45 (DG), histidine 49, 114-115 (NE), aspartate 144, alanine 152, 155-160 (SAYNLS), and glutamine 216.

It belongs to the NAD kinase family. Requires a divalent metal cation as cofactor.

The protein resides in the cytoplasm. The catalysed reaction is NAD(+) + ATP = ADP + NADP(+) + H(+). Involved in the regulation of the intracellular balance of NAD and NADP, and is a key enzyme in the biosynthesis of NADP. Catalyzes specifically the phosphorylation on 2'-hydroxyl of the adenosine moiety of NAD to yield NADP. The sequence is that of NAD kinase from Rickettsia prowazekii (strain Madrid E).